A 215-amino-acid polypeptide reads, in one-letter code: Probable transaldolase (215 aa).

Catalysis depends on K83, which acts as the Schiff-base intermediate with substrate.

It belongs to the transaldolase family. Type 3B subfamily.

It is found in the cytoplasm. The catalysed reaction is D-sedoheptulose 7-phosphate + D-glyceraldehyde 3-phosphate = D-erythrose 4-phosphate + beta-D-fructose 6-phosphate. It participates in carbohydrate degradation; pentose phosphate pathway; D-glyceraldehyde 3-phosphate and beta-D-fructose 6-phosphate from D-ribose 5-phosphate and D-xylulose 5-phosphate (non-oxidative stage): step 2/3. Its function is as follows. Transaldolase is important for the balance of metabolites in the pentose-phosphate pathway. This is Probable transaldolase from Pelotomaculum thermopropionicum (strain DSM 13744 / JCM 10971 / SI).